Consider the following 150-residue polypeptide: uncharacterized protein (150 aa).

Residues Ser19–Phe39 form a helical membrane-spanning segment.

The protein to B.subtilis YpjC, YqfU and YitT.

Its subcellular location is the cell membrane. This is an uncharacterized protein from Bacillus sp. (strain PS3).